The chain runs to 32 residues: Cypmaclein (32 aa).

Belongs to the GASA family. Expressed in pollen (at protein level).

The protein is Cypmaclein of Cupressus sempervirens (Italian cypress).